Consider the following 70-residue polypeptide: Putative membrane protein insertion efficiency factor (70 aa).

The protein belongs to the UPF0161 family.

It localises to the cell membrane. Could be involved in insertion of integral membrane proteins into the membrane. This Symbiobacterium thermophilum (strain DSM 24528 / JCM 14929 / IAM 14863 / T) protein is Putative membrane protein insertion efficiency factor.